A 206-amino-acid polypeptide reads, in one-letter code: Probable thymidylate kinase (206 aa).

Residue 10-17 (GIDGSGKS) participates in ATP binding.

This sequence belongs to the thymidylate kinase family.

It catalyses the reaction dTMP + ATP = dTDP + ADP. The polypeptide is Probable thymidylate kinase (Methanosarcina mazei (strain ATCC BAA-159 / DSM 3647 / Goe1 / Go1 / JCM 11833 / OCM 88) (Methanosarcina frisia)).